The following is a 432-amino-acid chain: MQVSVETTQGLGRRVTITIAADSIETAVKSELVNVAKKVRIDGFRKGKVPMNIVAQRYGASVRQDVLGDLMSRNFIDAIIKEKINPAGAPTYVPGEYKLGEDFTYSVEFEVYPEVELQGLEAIEVEKPIVEVTDADVDGMLDTLRKQQATWKEKDGAVEAEDRVTIDFTGSVDGEEFEGGKASDFVLAMGQGRMIPGFEDGIKGHKAGEEFTIDVTFPEEYHAENLKGKAAKFAINLKKVEERELPELTEEFIKRFGVEDGSVEGLRAEVRKNMERELKSAIRNRVKSQAIEGLVKANDIDVPAALIDSEIDVLRRQAAQRFGGNEKQALELPRELFEEQAKRRVVVGLLLGEVIRTNELKADEERVKGLIEEMASAYEDPKEVIEFYSKNKELMDNMRNVALEEQAVEAVLAKAKVTEKETTFNELMNQQA.

The region spanning 161–246 (EDRVTIDFTG…LKKVEERELP (86 aa)) is the PPIase FKBP-type domain.

It belongs to the FKBP-type PPIase family. Tig subfamily. Homodimer and monomer. In vivo most of the ribosomes are in complex with monomeric TF. Uncomplexed TF, however, is in a monomer-dimer equilibrium with approximately two thirds of TF existing in a dimeric state.

Its subcellular location is the cytoplasm. It catalyses the reaction [protein]-peptidylproline (omega=180) = [protein]-peptidylproline (omega=0). Functionally, involved in protein export. Acts as a chaperone by maintaining the newly synthesized protein in an open conformation. Functions as a peptidyl-prolyl cis-trans isomerase. This chain is Trigger factor, found in Escherichia coli O6:K15:H31 (strain 536 / UPEC).